Here is a 510-residue protein sequence, read N- to C-terminus: Ankyrin repeat domain-containing protein 13C-A (510 aa).

Basic and acidic residues predominate over residues 1–19 (MTGEKIRSLHKDQKPSKDE). Residues 1–35 (MTGEKIRSLHKDQKPSKDEDLLEPDEEATAGGTFT) form a disordered region. ANK repeat units follow at residues 80–111 (DVYF…QKDS), 112–141 (HGNT…PVKV), and 145–174 (QGWS…QQSR).

Its subcellular location is the endoplasmic reticulum membrane. Its function is as follows. Acts as a molecular chaperone for G protein-coupled receptors, regulating their biogenesis and exit from the ER. This chain is Ankyrin repeat domain-containing protein 13C-A (ankrd13c-a), found in Xenopus laevis (African clawed frog).